We begin with the raw amino-acid sequence, 1077 residues long: MPRRKQQAPRRSAAYVPAEELKAAETEEDNLEDDGLSLDVQDSEYLYNDEHEIKETQSYQNSPISSATNPDAGYGSPFSEASDHLADFKSTSSKEGQDKEDGQSTENASYPTDSLAQIKAVYTNLLSECCWSNLALDLKKSNEKASPTTNTDKSSKSEASGPTSDPGTPTTITSSSCTNTSTSICVTTSNSAISNTASGYDWHQAALAKTLQQTSYGLLPEPSLFSTVQLYRQSNKLYGSVFTGASKFRCKDCSAAYDTLVELTVHMNETGHYRDDNRDREAERTKRWSKPRKRSLMEMEGKEDAQKVLKCMYCGHSFESLQDLSVHMIKTKHYQKVPLKEPVPAITKLVPSTKKRALQDIALPDSPEQAGISPGASVSESAKDPKAANPYVTPNNRYGYQNGASYTWQFEARKAQILKCMECGSSHDTLQQLTAHMMVTGHFLKVTNSASKKGKQLVMDAVLEEKIQSIPLPPTTHARLPATYIKKPPDSPTGSTHSEEKKDPEKEKVNIGEVEKKIKEENEDPEKIEPATLYQYLREEDLDDSPKGGLDILKSLENTVSSAISKAQNGAPSWGGYPSIHAAYQLPGTIKALQPSVQSVQIQPSYASSVKTMSSDHNALIHSPGSLTPPPHKSNVSAMEELVEKVTGKINVKKEEKVLEKEKVISAKPPSPMAKENKEILKPEEANSKTLKKHNEAEIQKPKKETPIESHALNGTEPLKAKVTNGCTSLGIITDHSPEQSFINPLSALQSIMNTHLGKVSKPVSPSLDPLAMLYKISNSMLDKPIYPTTPMKQVESIDRYYYEDSDQPIDLTKSKNKPLVTSITDPVSSPLRESALMDISDMVKNLTGRLTPKSSTPSTVSEKSDADGSSFEEALDELSPVHKRKGRQSNWNPQHLLILQAQFASSLRETAEGKYIMSDLGPQERVHISKFTGLSMTTISHWLANVKYQLRRTGGTKFLKNLDTGHPVFFCNDCASQFRTASTYIGHLETHLGFSLKDLSKLSLNQIQEQQNVTKVITNKALSSVGLIEEDSGSTFQCKLCNRTFASKHAVKLHLSKTHGKSPEDHVIYVTELEKQ.

2 disordered regions span residues 1-110 (MPRR…NASY) and 142-179 (NEKASPTTNTDKSSKSEASGPTSDPGTPTTITSSSCTN). Positions 26–36 (TEEDNLEDDGL) are enriched in acidic residues. Residues 56–69 (TQSYQNSPISSATN) show a composition bias toward polar residues. The span at 160–179 (SGPTSDPGTPTTITSSSCTN) shows a compositional bias: low complexity. The segment at 248 to 272 (FRCKDCSAAYDTLVELTVHMNETGH) adopts a C2H2-type 1 zinc-finger fold. Residues 274–286 (RDDNRDREAERTK) show a composition bias toward basic and acidic residues. The segment at 274 to 300 (RDDNRDREAERTKRWSKPRKRSLMEME) is disordered. The segment at 309–333 (LKCMYCGHSFESLQDLSVHMIKTKH) adopts a C2H2-type 2 zinc-finger fold. Residues 362–394 (ALPDSPEQAGISPGASVSESAKDPKAANPYVTP) form a disordered region. The C2H2-type 3 zinc finger occupies 418 to 442 (LKCMECGSSHDTLQQLTAHMMVTGH). 2 disordered regions span residues 473–530 (PPTT…KIEP) and 849–873 (GRLTPKSSTPSTVSEKSDADGSSFE). Over residues 497 to 529 (HSEEKKDPEKEKVNIGEVEKKIKEENEDPEKIE) the composition is skewed to basic and acidic residues. Residues 853–862 (PKSSTPSTVS) show a composition bias toward polar residues. The homeobox DNA-binding region spans 885 to 955 (RKGRQSNWNP…NVKYQLRRTG (71 aa)). C2H2-type zinc fingers lie at residues 970-992 (FFCNDCASQFRTASTYIGHLETH) and 1037-1060 (FQCKLCNRTFASKHAVKLHLSKTH).

This sequence belongs to the teashirt C2H2-type zinc-finger protein family.

Its subcellular location is the nucleus. Functionally, probable transcriptional regulator involved in developmental processes. May act as a transcriptional repressor (Potential). Involved in two major neuronal regionalization processes: primary anteroposterior (AP) axis patterning of the CNS and segmentation of the cranial neuronal crest (CNS) development. The sequence is that of Teashirt homolog 1-B (tshz1-b) from Xenopus laevis (African clawed frog).